Here is a 241-residue protein sequence, read N- to C-terminus: MGFLPIALPFAELEVGQHLYWQIGNLQLHGQVFMTSWIVIGAILALVVVGTRKMERDPHGVQNLLEFLWDYIRDLARTQIGEKAYRDWMPFIGTLFLFIFVSNWGGSLVPWKLIHLPSGELGAPTADINTTVALALLVSLSYFYAGLSRKGLRYFEYYVHPTPIMIPFKIVEDFTKPLSLSFRLFGNILADELVVAVLVFLVPLFLPVPVMFLGLFTSAIQALIFATLAAYYIGEAVEEHH.

5 helical membrane passes run 30–50 (GQVF…VVVG), 91–111 (FIGT…LVPW), 128–148 (INTT…AGLS), 193–213 (LVVA…VMFL), and 214–234 (GLFT…YYIG).

This sequence belongs to the ATPase A chain family. F-type ATPases have 2 components, CF(1) - the catalytic core - and CF(0) - the membrane proton channel. CF(1) has five subunits: alpha(3), beta(3), gamma(1), delta(1), epsilon(1). CF(0) has four main subunits: a, b, b' and c.

It is found in the cellular thylakoid membrane. Key component of the proton channel; it plays a direct role in the translocation of protons across the membrane. This Prochlorococcus marinus (strain MIT 9313) protein is ATP synthase subunit a.